Consider the following 295-residue polypeptide: Craniofacial development protein 1 (295 aa).

2 stretches are compositionally biased toward acidic residues: residues 1–18 and 25–43; these read MEEF…DEDY and YSED…DGEE. Disordered regions lie at residues 1–153 and 188–217; these read MEEF…LDKP and FLKQ…IKRA. Positions 49-65 are enriched in basic residues; sequence KGKRRKAQGIPARKRKQ. Phosphoserine occurs at positions 80, 83, 84, and 112. K146 participates in a covalent cross-link: Glycyl lysine isopeptide (Lys-Gly) (interchain with G-Cter in SUMO2). Residues 174–213 are hydrophilic; it reads VTKEVDAASKEAKSFLKQTEREKPQALVTSPATPLPAGSG. A compositionally biased stretch (basic and acidic residues) spans 188–197; that stretch reads FLKQTEREKP. S212 is subject to Phosphoserine. The region spanning 214–295 is the BCNT-C domain; it reads IKRASGMSSL…RDLRLSKMKP (82 aa). Position 215 is an N6-methyllysine (K215). The residue at position 246 (S246) is a Phosphoserine.

As to expression, expressed in lung, liver and heart, with higher expression in teeth.

The protein localises to the chromosome. It localises to the centromere. The protein resides in the kinetochore. In terms of biological role, may play a role during embryogenesis. May modulate tooth organogenesis since alterations of this protein function affect tooth organs size as well as individual cell fate and survival. In embryonic cells, blockage of the function results in increased number of apoptotic cells, reduced proliferation, alterations in cell shape and fibronection matrix synthesis. The protein is Craniofacial development protein 1 (Cfdp1) of Mus musculus (Mouse).